The primary structure comprises 371 residues: Glutamate 5-kinase (371 aa).

K10 is a binding site for ATP. The substrate site is built by S50, D137, and N149. ATP contacts are provided by residues 169 to 170 (SD) and 208 to 214 (TGGMFTK). The PUA domain occupies 274–352 (EGRIYIDDGA…EEIRNILGED (79 aa)).

Belongs to the glutamate 5-kinase family.

It localises to the cytoplasm. It catalyses the reaction L-glutamate + ATP = L-glutamyl 5-phosphate + ADP. Its pathway is amino-acid biosynthesis; L-proline biosynthesis; L-glutamate 5-semialdehyde from L-glutamate: step 1/2. Catalyzes the transfer of a phosphate group to glutamate to form L-glutamate 5-phosphate. The protein is Glutamate 5-kinase of Dictyoglomus turgidum (strain DSM 6724 / Z-1310).